An 874-amino-acid chain; its full sequence is Alanine--tRNA ligase (874 aa).

Positions 564, 568, 665, and 669 each coordinate Zn(2+).

This sequence belongs to the class-II aminoacyl-tRNA synthetase family. Zn(2+) serves as cofactor.

It localises to the cytoplasm. The enzyme catalyses tRNA(Ala) + L-alanine + ATP = L-alanyl-tRNA(Ala) + AMP + diphosphate. In terms of biological role, catalyzes the attachment of alanine to tRNA(Ala) in a two-step reaction: alanine is first activated by ATP to form Ala-AMP and then transferred to the acceptor end of tRNA(Ala). Also edits incorrectly charged Ser-tRNA(Ala) and Gly-tRNA(Ala) via its editing domain. This chain is Alanine--tRNA ligase, found in Paraburkholderia phytofirmans (strain DSM 17436 / LMG 22146 / PsJN) (Burkholderia phytofirmans).